The sequence spans 147 residues: Ponticulin-like protein C2 (147 aa).

A signal peptide spans 1 to 20 (MKFTKPLLLLIVAIIASSNA). The GPI-like-anchor amidated asparagine moiety is linked to residue N118. N118 carries N-linked (GlcNAc...) asparagine glycosylation. Positions 119–147 (SSESDSSDSTRIGASFALFALALLSMLAL) are cleaved as a propeptide — removed in mature form.

Belongs to the ponticulin family. Post-translationally, the GPI-like-anchor contains a phosphoceramide group, rather than a phosphatidyl group.

The protein resides in the cell membrane. The sequence is that of Ponticulin-like protein C2 (ponC2) from Dictyostelium discoideum (Social amoeba).